The following is a 641-amino-acid chain: MGSLQTPTNLSNKSCLCVSGRVVKGLRVERQVGLGFSWLLKGRRNRKVQSLCVTSSVSDGSSIAENKNVSEGLLLGAERDGSGSVVGFQLIPHSVAGDATMVESHDIVANDRDDLSEDTEEMEETPIKLTFNIIFVTAEAAPYSKTGGLGDVCGSLPMALAARGHRVMVVSPRYLNGGPSDEKYANAVDLDVRATVHCFGDAQEVAFYHEYRAGVDWVFVDHSSYCRPGTPYGDIYGAFGDNQFRFTLLSHAACEAPLVLPLGGFTYGEKCLFLANDWHAALVPLLLAAKYRPYGVYKDARSIVAIHNIAHQGVEPAVTYNNLGLPPQWYGAVEWIFPTWARAHALDTGETVNVLKGAIAVADRILTVSQGYSWEITTPEGGYGLHELLSSRQSVLNGITNGIDVNDWNPSTDEHIASHYSINDLSGKVQCKTDLQKELGLPIRPDCPLIGFIGRLDYQKGVDIILSAIPELMQNDVQVVMLGSGEKQYEDWMRHTENLFKDKFRAWVGFNVPVSHRITAGCDILLMPSRFEPCGLNQLYAMRYGTIPIVHSTGGLRDTVKDFNPYAQEGIGEGTGWTFSPLTSEKLLDTLKLAIGTYTEHKSSWEGLMRRGMGRDYSWENAAIQYEQVFTWAFIDPPYVR.

Lys-145 contacts ADP-alpha-D-glucose.

It belongs to the glycosyltransferase 1 family. Bacterial/plant glycogen synthase subfamily. High expression in leaves and very low in tubers.

The protein resides in the plastid. It is found in the chloroplast. Its subcellular location is the amyloplast. The catalysed reaction is [(1-&gt;4)-alpha-D-glucosyl](n) + ADP-alpha-D-glucose = [(1-&gt;4)-alpha-D-glucosyl](n+1) + ADP + H(+). Its pathway is glycan biosynthesis; starch biosynthesis. Functionally, plays a minor role in starch synthesis in storage organs (tubers), but may contribute to the deposition of transient starch in chloroplasts of leaves. The chain is Soluble starch synthase 1, chloroplastic/amyloplastic from Solanum tuberosum (Potato).